We begin with the raw amino-acid sequence, 279 residues long: Large ribosomal subunit protein uL2 (279 aa).

The interval 224–279 (AMNPIDHPHGGGEGRTSGGRHPVTPWGKGTKGNRTRKSKASDKLIVRSRHAKKKGR) is disordered. Residues 269-279 (VRSRHAKKKGR) show a composition bias toward basic residues.

Belongs to the universal ribosomal protein uL2 family. In terms of assembly, part of the 50S ribosomal subunit. Forms a bridge to the 30S subunit in the 70S ribosome.

In terms of biological role, one of the primary rRNA binding proteins. Required for association of the 30S and 50S subunits to form the 70S ribosome, for tRNA binding and peptide bond formation. It has been suggested to have peptidyltransferase activity; this is somewhat controversial. Makes several contacts with the 16S rRNA in the 70S ribosome. The polypeptide is Large ribosomal subunit protein uL2 (Cereibacter sphaeroides (strain ATCC 17029 / ATH 2.4.9) (Rhodobacter sphaeroides)).